Consider the following 185-residue polypeptide: Ribosome-recycling factor (185 aa).

Belongs to the RRF family.

Its subcellular location is the cytoplasm. In terms of biological role, responsible for the release of ribosomes from messenger RNA at the termination of protein biosynthesis. May increase the efficiency of translation by recycling ribosomes from one round of translation to another. In Streptomyces avermitilis (strain ATCC 31267 / DSM 46492 / JCM 5070 / NBRC 14893 / NCIMB 12804 / NRRL 8165 / MA-4680), this protein is Ribosome-recycling factor.